Here is a 179-residue protein sequence, read N- to C-terminus: Large ribosomal subunit protein uL6 (179 aa).

It belongs to the universal ribosomal protein uL6 family. In terms of assembly, part of the 50S ribosomal subunit.

This protein binds to the 23S rRNA, and is important in its secondary structure. It is located near the subunit interface in the base of the L7/L12 stalk, and near the tRNA binding site of the peptidyltransferase center. In Prochlorococcus marinus (strain MIT 9313), this protein is Large ribosomal subunit protein uL6.